The chain runs to 942 residues: Lon protease homolog 4, chloroplastic/mitochondrial (942 aa).

Residue Ser54 is modified to Phosphoserine. The Lon N-terminal domain occupies 79-301; that stretch reads VIALPLPHKP…LTLELVKKEV (223 aa). Residue 456–463 coordinates ATP; the sequence is GPTGVGKT. The tract at residues 673 to 725 is disordered; sequence ISDDVTTDTEETKSLAKTDLESPETSAEGSTVLTDELATGDPTESTTEQSGEV. Positions 682 to 692 are enriched in basic and acidic residues; the sequence is EETKSLAKTDL. The segment covering 695 to 705 has biased composition (polar residues); sequence PETSAEGSTVL. The 185-residue stretch at 756–940 folds into the Lon proteolytic domain; that stretch reads QTPVGVVMGL…EQIFELAFGY (185 aa). Active-site residues include Ser846 and Lys889.

This sequence belongs to the peptidase S16 family. In terms of assembly, homohexamer or homoheptamer. Organized in a ring with a central cavity.

It localises to the mitochondrion matrix. The protein localises to the plastid. The protein resides in the chloroplast thylakoid membrane. The catalysed reaction is Hydrolysis of proteins in presence of ATP.. ATP-dependent serine protease that mediates the selective degradation of misfolded, unassembled or oxidatively damaged polypeptides as well as certain short-lived regulatory proteins in the mitochondrial matrix. May also have a chaperone function in the assembly of inner membrane protein complexes. Participates in the regulation of mitochondrial gene expression and in the maintenance of the integrity of the mitochondrial genome. Binds to mitochondrial DNA in a site-specific manner. This Arabidopsis thaliana (Mouse-ear cress) protein is Lon protease homolog 4, chloroplastic/mitochondrial (LON4).